The sequence spans 601 residues: Elongation factor 4 (601 aa).

The region spanning 7-189 (DNIRNFSIVA…AIVKRLPAPK (183 aa)) is the tr-type G domain. Residues 19–24 (DHGKST) and 136–139 (NKVD) each bind GTP.

The protein belongs to the TRAFAC class translation factor GTPase superfamily. Classic translation factor GTPase family. LepA subfamily.

It localises to the cell inner membrane. It catalyses the reaction GTP + H2O = GDP + phosphate + H(+). Functionally, required for accurate and efficient protein synthesis under certain stress conditions. May act as a fidelity factor of the translation reaction, by catalyzing a one-codon backward translocation of tRNAs on improperly translocated ribosomes. Back-translocation proceeds from a post-translocation (POST) complex to a pre-translocation (PRE) complex, thus giving elongation factor G a second chance to translocate the tRNAs correctly. Binds to ribosomes in a GTP-dependent manner. The chain is Elongation factor 4 from Methylorubrum extorquens (strain CM4 / NCIMB 13688) (Methylobacterium extorquens).